A 783-amino-acid chain; its full sequence is DNA ligase (783 aa).

NAD(+) is bound by residues 42 to 46 (DAEYD), 91 to 92 (SL), and E125. K127 serves as the catalytic N6-AMP-lysine intermediate. 4 residues coordinate NAD(+): R148, E185, K302, and K326. Residues C421, C423, C445, and C451 each contribute to the Zn(2+) site. Residues 705-783 (KTDTAVAGKT…EDEWLELVAG (79 aa)) form the BRCT domain.

It belongs to the NAD-dependent DNA ligase family. LigA subfamily. Mg(2+) is required as a cofactor. The cofactor is Mn(2+).

The catalysed reaction is NAD(+) + (deoxyribonucleotide)n-3'-hydroxyl + 5'-phospho-(deoxyribonucleotide)m = (deoxyribonucleotide)n+m + AMP + beta-nicotinamide D-nucleotide.. DNA ligase that catalyzes the formation of phosphodiester linkages between 5'-phosphoryl and 3'-hydroxyl groups in double-stranded DNA using NAD as a coenzyme and as the energy source for the reaction. It is essential for DNA replication and repair of damaged DNA. This is DNA ligase from Caulobacter vibrioides (strain ATCC 19089 / CIP 103742 / CB 15) (Caulobacter crescentus).